Reading from the N-terminus, the 164-residue chain is UPF0114 protein Spro_2386 (164 aa).

A run of 3 helical transmembrane segments spans residues 15–35 (LLAPVYFGLSLALLALSIKFF), 53–73 (LVLTLLSLIDMALVGGLLVMV), and 136–156 (LMWYVIIHLTFVLSAFVMGYL).

Belongs to the UPF0114 family.

The protein resides in the cell membrane. The protein is UPF0114 protein Spro_2386 of Serratia proteamaculans (strain 568).